Consider the following 1941-residue polypeptide: Xin actin-binding repeat-containing protein 1 (1941 aa).

Positions 1-41 are disordered; it reads MAEPQKSSKVAIKKMEDDLPPPPIPDSIQVIAPASQDPNPL. 27 Xin repeats span residues 108–123, 143–158, 176–191, 215–230, 255–270, 293–308, 331–346, 368–383, 402–417, 439–454, 475–490, 510–525, 548–563, 586–601, 624–639, 658–673, 697–712, 736–751, 769–784, 805–820, 842–857, 880–895, 917–932, 951–966, 982–997, 1020–1035, and 1055–1070; these read GEVQ…WALD, GDVK…QSVN, GDVH…QPLD, GDVK…QSLD, GDVK…EPLC, NAVR…QPLD, PDVS…QPLD, ADVT…QALD, GDVK…QPME, GDVK…CPLG, GDVK…LPLD, GNVK…TPLY, GDVK…RPLD, GDVR…QPMD, GDVK…QPMH, ADVK…QPLD, VDVK…EPLG, GEVS…KPLD, GSVH…YPMD, GDVG…YSLD, ANVK…QPLY, GDVK…KPLD, GDVQ…EPLD, GDVQ…QQVG, GDVR…QPVD, GDVK…QPMD, and ADVK…TPLD. The segment covering 1514 to 1565 has biased composition (polar residues); it reads ASKQETKTLQSTIHQQESASTMRENTSTAIRTSTTRVQEASRTHTSVSQKSI. Disordered regions lie at residues 1514 to 1568, 1715 to 1856, and 1914 to 1941; these read ASKQ…IASH, ASGS…PPPA, and YKAR…GEVG. Residues 1820 to 1833 show a composition bias toward low complexity; that stretch reads SASTNNSTNRSTKS. Positions 1834 to 1843 are enriched in pro residues; it reads VPPPVPPKPP.

It belongs to the Xin family. In terms of tissue distribution, expressed at intercalated disks in the heart (at protein level).

It localises to the cell junction. The protein resides in the adherens junction. Its subcellular location is the desmosome. Functionally, involved in cardiac morphogenesis, including heart midline formation, cardiac tubule looping, myocardial formation and maintenance of heart beat speed and rhythm. May protect actin filaments from depolymerization. May play a role in development of normal skeletal muscle morphology, muscle fiber type composition and regulation of muscle satellite cell activation and survival. This chain is Xin actin-binding repeat-containing protein 1, found in Gallus gallus (Chicken).